A 553-amino-acid polypeptide reads, in one-letter code: Phosphoenolpyruvate carboxykinase (ATP) (553 aa).

Residues 1–22 (MAPPTAVGSSINFEGHPTIKST) are disordered. 255–262 (GLSGTGKT) contributes to the ATP binding site.

Belongs to the phosphoenolpyruvate carboxykinase (ATP) family.

It carries out the reaction oxaloacetate + ATP = phosphoenolpyruvate + ADP + CO2. The protein operates within carbohydrate biosynthesis; gluconeogenesis. In Candida albicans (Yeast), this protein is Phosphoenolpyruvate carboxykinase (ATP) (PCK1).